A 512-amino-acid polypeptide reads, in one-letter code: MEEFKRYLDLDTSRQHDFLYPLIFQEYIYALAHDHSLTRSNSLELEKAGYDNNSSLLIVKRLITHLITQMDRQNHLSFLTNDSSQNPFFGHNTALYSQIILEGFVVVVEIPFSIRVISSLDLEGKERVKSHNFRSIHSVFPFLEDKFSHLIYVLDLLIPQSIHLEILIQTLRYWVKDASSLHLLRAFLHKYHNWKNLITPKKSSFSFSKRNKRFFFFFYNFHVYEYESILAFICNQSSHLQSKSYRPFLDRIYFYEKRDHFVEVFTKYFQAVLWSFNDPFMHYVRYQGKALLASKGTFLLMNKWNYYLVNFWQCYFYMWSQPGRIHINKLSNHYLELLGYLSSVGLNSSMVRNQMLENAFLIANASKKFDTTVPIIPLIRSFSKAKFCNLLGHPISKPIWTDLSDSDIIDRFGCIYRNISHYYSGSSQKMSLYRIKYIIKLSCARTLARKHKSTVRAFLKRVGLEFLEEFFLEDEFMFSLTFPKASYISGGLYRMRIWYLDIFCIHDLANHK.

The protein belongs to the intron maturase 2 family. MatK subfamily.

It is found in the plastid. The protein localises to the chloroplast. Usually encoded in the trnK tRNA gene intron. Probably assists in splicing its own and other chloroplast group II introns. This chain is Maturase K, found in Soldanella alpina (Alpine snowbell).